The sequence spans 74 residues: MFTMKKSLLLIFFLGTISLSLCQEERNADDDDGEMTEEEKRGIMDTLKNLAKTAGKGALQSLVKMASCKLSGQC.

An N-terminal signal peptide occupies residues 1–22; the sequence is MFTMKKSLLLIFFLGTISLSLC. Positions 23–41 are excised as a propeptide; it reads QEERNADDDDGEMTEEEKR. Cys-68 and Cys-74 are joined by a disulfide.

It belongs to the frog skin active peptide (FSAP) family. Brevinin subfamily. Expressed by the skin glands.

Its subcellular location is the secreted. Shows antibacterial activity against representative Gram-negative and Gram-positive bacterial species, and hemolytic activity. The polypeptide is Brevinin-2Ef (Pelophylax lessonae (Pool frog)).